Consider the following 99-residue polypeptide: DNA-binding protein Fis (99 aa).

The segment at residues 75-94 is a DNA-binding region (H-T-H motif); it reads QTRAANMLGINRGTLRKKLK.

Belongs to the transcriptional regulatory Fis family. Homodimer.

Activates ribosomal RNA transcription. Plays a direct role in upstream activation of rRNA promoters. This chain is DNA-binding protein Fis, found in Haemophilus influenzae (strain 86-028NP).